We begin with the raw amino-acid sequence, 616 residues long: Probable Xaa-Pro aminopeptidase P (616 aa).

Residues D413, D424, E522, and E536 each coordinate Mn(2+).

It belongs to the peptidase M24B family. The cofactor is Mn(2+).

The catalysed reaction is Release of any N-terminal amino acid, including proline, that is linked to proline, even from a dipeptide or tripeptide.. In terms of biological role, catalyzes the removal of a penultimate prolyl residue from the N-termini of peptides. In Paracoccidioides lutzii (strain ATCC MYA-826 / Pb01) (Paracoccidioides brasiliensis), this protein is Probable Xaa-Pro aminopeptidase P (AMPP).